Here is a 189-residue protein sequence, read N- to C-terminus: DnaJ homolog subfamily C member 5G (189 aa).

In terms of domain architecture, J spans 17-98 (SLYAVLDLKK…KKRKIYDQHG (82 aa)). A disordered region spans residues 154–189 (PEQDSGRKYQQNVQSQPPRSGAKCDFRSEENSEDDF). Positions 161–171 (KYQQNVQSQPP) are enriched in polar residues.

Post-translationally, palmitoylated. Testis specific.

The protein resides in the membrane. The sequence is that of DnaJ homolog subfamily C member 5G (DNAJC5G) from Homo sapiens (Human).